The following is a 582-amino-acid chain: Inactive metallocarboxypeptidase ECM14 (582 aa).

The signal sequence occupies residues 1 to 20 (MHILQVITGATLVSVPFVSA). A propeptide spanning residues 21-172 (IPSSTSEFLP…QAVYESYPQP (152 aa)) is cleaved from the precursor. The Peptidase M14 domain occupies 200–522 (DYQPLSVIIP…NAVLVFGQFL (323 aa)). Residues His-265 and Glu-268 each contribute to the Zn(2+) site. Residues 265–268 (HARE), Arg-323, and 340–341 (DR) contribute to the substrate site. An intrachain disulfide couples Cys-334 to Cys-357. Residues Asn-381 and Asn-387 are each glycosylated (N-linked (GlcNAc...) asparagine). His-397 is a binding site for Zn(2+). 398-399 (SY) serves as a coordination point for substrate. Positions 561–571 (SNQLEDDDNEN) are enriched in acidic residues. The tract at residues 561–582 (SNQLEDDDNENDTLLGFRTQKV) is disordered. A glycan (N-linked (GlcNAc...) asparagine) is linked at Asn-571.

It belongs to the peptidase M14 family. Zn(2+) serves as cofactor.

The protein resides in the vacuole. It is found in the secreted. In terms of biological role, inactive carboxypeptidase that may play a role in cell wall organization and biogenesis. The protein is Inactive metallocarboxypeptidase ECM14 (ECM14) of Coccidioides posadasii (strain RMSCC 757 / Silveira) (Valley fever fungus).